The chain runs to 362 residues: UDP-N-acetylglucosamine--N-acetylmuramyl-(pentapeptide) pyrophosphoryl-undecaprenol N-acetylglucosamine transferase (362 aa).

UDP-N-acetyl-alpha-D-glucosamine-binding positions include Thr-15 to Gly-17, Asn-127, Arg-165, Ser-191, Ile-247, Ala-266 to Glu-271, and Gln-292.

Belongs to the glycosyltransferase 28 family. MurG subfamily.

The protein resides in the cell inner membrane. The enzyme catalyses di-trans,octa-cis-undecaprenyl diphospho-N-acetyl-alpha-D-muramoyl-L-alanyl-D-glutamyl-meso-2,6-diaminopimeloyl-D-alanyl-D-alanine + UDP-N-acetyl-alpha-D-glucosamine = di-trans,octa-cis-undecaprenyl diphospho-[N-acetyl-alpha-D-glucosaminyl-(1-&gt;4)]-N-acetyl-alpha-D-muramoyl-L-alanyl-D-glutamyl-meso-2,6-diaminopimeloyl-D-alanyl-D-alanine + UDP + H(+). Its pathway is cell wall biogenesis; peptidoglycan biosynthesis. Functionally, cell wall formation. Catalyzes the transfer of a GlcNAc subunit on undecaprenyl-pyrophosphoryl-MurNAc-pentapeptide (lipid intermediate I) to form undecaprenyl-pyrophosphoryl-MurNAc-(pentapeptide)GlcNAc (lipid intermediate II). The polypeptide is UDP-N-acetylglucosamine--N-acetylmuramyl-(pentapeptide) pyrophosphoryl-undecaprenol N-acetylglucosamine transferase (Shewanella baltica (strain OS223)).